Reading from the N-terminus, the 452-residue chain is uncharacterized protein (452 aa).

Transmembrane regions (helical) follow at residues 8–28 (AVFL…SSMI), 39–59 (FHLS…ASAV), 77–97 (FLFG…APTF), 100–122 (LLVM…VGLI), 134–156 (LAVL…GFLI), 161–183 (WPAI…LYMF), 203–222 (LGIV…LLSF), 226–243 (PHAV…AFVW), 266–286 (AVYV…FGLP), 302–322 (LFML…GKWI), 330–350 (PIFA…IFFI), 359–379 (LILS…QAAM), 393–415 (GLFQ…ILFG), and 425–447 (MMGI…FAAL).

This sequence belongs to the major facilitator superfamily.

The protein resides in the cell membrane. This is an uncharacterized protein from Bacillus subtilis (strain 168).